The sequence spans 2188 residues: Genome polyprotein (2188 aa).

The Cell attachment site motif lies at 772 to 774; it reads RGD. Residues 795–889 enclose the LRAT domain; that stretch reads LAYLDRGFYK…DIFGTHTLSQ (95 aa). The For protein 2A H-NC role is filled by His-805. Cys-874 (for protein 2A H-NC; Acyl-thioester intermediate) is an active-site residue. Residues 1165–1326 form the SF3 helicase domain; the sequence is FQELARIPNR…KAYSKSGKLN (162 aa). Position 1193-1200 (1193-1200) interacts with ATP; the sequence is GEPGQGKS. At Tyr-1502 the chain carries O-(5'-phospho-RNA)-tyrosine. The 191-residue stretch at 1526–1716 folds into the Peptidase C3 domain; the sequence is APYDGQLEHI…IPFNFLKNDM (191 aa). Residues His-1566, Asp-1604, and Cys-1678 each act as for protease 3C activity in the active site. Cys-1905 (acyl-thioester intermediate) is an active-site residue. One can recognise a RdRp catalytic domain in the interval 1953–2067; the sequence is DYNYEMDYSQ…SLDREIEPER (115 aa). Mg(2+)-binding residues include Asp-1959 and Asp-2053.

The protein belongs to the picornaviruses polyprotein family. In terms of assembly, interacts with capsid protein VP1 and capsid protein VP3 to form heterotrimeric protomers. Five protomers subsequently associate to form pentamers which serve as building blocks for the capsid. As to quaternary structure, interacts with capsid protein VP0, and capsid protein VP3 to form heterotrimeric protomers. Five protomers subsequently associate to form pentamers which serve as building blocks for the capsid. Interacts with capsid protein VP0 and capsid protein VP1 to form heterotrimeric protomers. Five protomers subsequently associate to form pentamers which serve as building blocks for the capsid. In terms of assembly, homohexamer; forms a hexameric ring structure with 6-fold symmetry characteristic of AAA+ ATPases. As to quaternary structure, homodimer. Interacts with host ACBD3. Interacts with RNA-directed RNA polymerase. In terms of assembly, interacts with Viral protein genome-linked. Mg(2+) serves as cofactor. In terms of processing, VPg is uridylylated by the polymerase and is covalently linked to the 5'-end of genomic RNA. This uridylylated form acts as a nucleotide-peptide primer for the polymerase. Post-translationally, specific enzymatic cleavages yield mature proteins. All cleavages are catalyzed by P3C.

Its subcellular location is the virion. The protein localises to the host cytoplasm. The protein resides in the host nucleus. It localises to the host nucleolus. It is found in the host cytoplasmic vesicle membrane. It carries out the reaction RNA(n) + a ribonucleoside 5'-triphosphate = RNA(n+1) + diphosphate. The catalysed reaction is a ribonucleoside 5'-triphosphate + H2O = a ribonucleoside 5'-diphosphate + phosphate + H(+). The enzyme catalyses Selective cleavage of Gln-|-Gly bond in the poliovirus polyprotein. In other picornavirus reactions Glu may be substituted for Gln, and Ser or Thr for Gly.. Forms an icosahedral capsid of pseudo T=3 symmetry together with capsid proteins VP1 and VP3. The capsid is 300 Angstroms in diameter, composed of 60 copies of each capsid protein and enclosing the viral positive strand RNA genome. Capsid proteins interact with host alpha-V/beta-3 integrin heterodimer to provide virion attachment target cell. This attachment induces virion internalization predominantly through clathrin-mediated endocytosis. Binds packaging signals present in the viral RNA. Its function is as follows. Forms an icosahedral capsid of pseudo T=3 symmetry together with capsid proteins VP0 and VP1. The capsid is 300 Angstroms in diameter, composed of 60 copies of each capsid protein and enclosing the viral positive strand RNA genome. Capsid proteins interact with host alpha-V/beta-3 integrin heterodimer to provide virion attachment target cell. This attachment induces virion internalization predominantly through clathrin-mediated endocytosis. Binds packaging signals present in the viral RNA. Functionally, forms an icosahedral capsid of pseudo T=3 symmetry together with capsid proteins VP0 and VP3. The capsid is 300 Angstroms in diameter, composed of 60 copies of each capsid protein and enclosing the viral positive strand RNA genome. Capsid proteins interact with host alpha-V/beta-3 integrin heterodimer to provide virion attachment target cell. This attachment induces virion internalization predominantly through clathrin-mediated endocytosis. Binds packaging signals present in the viral RNA. In terms of biological role, is not a protease. Plays an essential role in the virus replication cycle by acting as a viroporin. Creates a pore in the host endoplasmic reticulum and as a consequence releases Ca2+ in the cytoplasm of infected cell. In turn, high levels of cytoplasmic calcium may trigger membrane trafficking and transport of viral ER-associated proteins to viroplasms, sites of viral genome replication. Its function is as follows. Induces and associates with structural rearrangements of intracellular membranes. Displays RNA-binding, nucleotide binding and NTPase activities. May play a role in virion morphogenesis and viral RNA encapsidation by interacting with the capsid protein VP3. Functionally, localizes the viral replication complex to the surface of membranous vesicles. It inhibits host cell endoplasmic reticulum-to-Golgi apparatus transport and causes the disassembly of the Golgi complex, possibly through GBF1 interaction. This would result in depletion of MHC, trail receptors and IFN receptors at the host cell surface. Plays an essential role in viral RNA replication by recruiting ACBD3 and PI4KB at the viral replication sites, thereby allowing the formation of the rearranged membranous structures where viral replication takes place. In terms of biological role, acts as a primer for viral RNA replication and remains covalently bound to viral genomic RNA. VPg is uridylylated prior to priming replication into VPg-pUpU. The VPg-pUpU is then used as primer on the genomic RNA poly(A) by the RNA-dependent RNA polymerase to replicate the viral genome. Following genome release from the infecting virion in the cytoplasm, the VPg-RNA linkage is probably removed by host TDP2. During the late stage of the replication cycle, host TDP2 is excluded from sites of viral RNA synthesis and encapsidation, allowing for the generation of progeny virions. Cysteine protease that generates mature viral proteins from the precursor polyprotein. In addition to its proteolytic activity, it binds to viral RNA, and thus influences viral genome replication. RNA and substrate bind cooperatively to the protease. Its function is as follows. Replicates the viral genomic RNA on the surface of intracellular membranes. Covalently attaches UMP to a tyrosine of VPg, which is used to prime RNA synthesis. The positive stranded RNA genome is first replicated at virus induced membranous vesicles, creating a dsRNA genomic replication form. This dsRNA is then used as template to synthesize positive stranded RNA genomes. ss(+)RNA genomes are either translated, replicated or encapsidated. The polypeptide is Genome polyprotein (Human parechovirus 5 (strain CT86-6760) (HPeV-5)).